Here is a 281-residue protein sequence, read N- to C-terminus: ATP synthase subunit a (281 aa).

7 helical membrane passes run 56–76 (KPMLLALLGSIVIVGFFWAAF), 117–137 (LVVSLFFFVWMMNLWSIIPVA), 144–164 (IIAYPAVLAAIVYVTWITLTF), 181–201 (KSLGPVLPLAMLIEFFSNILI), 215–235 (FAGHTLLLLFTIASWYLLNGV), 237–257 (IAYAGVSFIMTVVMTAFELFI), and 259–279 (ALQAYVFVLLTCTYIQGAMAE).

Belongs to the ATPase A chain family. F-type ATPases have 2 components, CF(1) - the catalytic core - and CF(0) - the membrane proton channel. CF(1) has five subunits: alpha(3), beta(3), gamma(1), delta(1), epsilon(1). CF(0) has three main subunits: a(1), b(2) and c(9-12). The alpha and beta chains form an alternating ring which encloses part of the gamma chain. CF(1) is attached to CF(0) by a central stalk formed by the gamma and epsilon chains, while a peripheral stalk is formed by the delta and b chains.

Its subcellular location is the cell membrane. In terms of biological role, key component of the proton channel; it plays a direct role in the translocation of protons across the membrane. In Streptomyces lividans, this protein is ATP synthase subunit a.